Here is a 435-residue protein sequence, read N- to C-terminus: MGSWIPKLLLLQLVLLLTKHADSSSIIKYLPGFEGPLPFELETGYIGVGEEDEDQMFYYFIKSESNPKTDPLLLWLSGGPGCSSFTGLIYENGPLGFKVEAYNGSIPTLVSTTYSWTKVANIIYLDQPVGTGFSYSRNPLADIPSDTGSAKRVDEFLRKWLTKHPEYFSNPFYAGGNSYSGKMVPVIVQEISNGNCIYGKPQIRLQGYVLGSPVTDYDLDRNSRIQFAHGMALISNELYESMKRTCGGNYIFVDPLNTECLELIKDYDNCVSGIYENLILVPKCDLTSPDCHSYRSMLSDYWANNESVRRALKVVEGTTGRWERCKWTLQNNKDIKSSIPYHKKNSIQGYRSLIFSGDHDMLTPYVGTQDWIRSLNYSIIDKWRPWMILDQVAGYTTTYANKMTFATVKGGGHTLDYKPDENSILFKRWISGQLL.

Residues 1 to 23 form the signal peptide; that stretch reads MGSWIPKLLLLQLVLLLTKHADS. 3 disulfide bridges follow: C82–C325, C246–C260, and C284–C291. N-linked (GlcNAc...) asparagine glycosylation occurs at N103. The active site involves S178. An N-linked (GlcNAc...) asparagine glycan is attached at N305. The active site involves D360. The N-linked (GlcNAc...) asparagine glycan is linked to N376. The active site involves H413.

This sequence belongs to the peptidase S10 family. In terms of tissue distribution, expressed in seedlings, roots and leaves.

The protein localises to the secreted. In terms of biological role, probable carboxypeptidase. This is Serine carboxypeptidase-like 16 (SCPL16) from Arabidopsis thaliana (Mouse-ear cress).